Reading from the N-terminus, the 340-residue chain is L-lysine 2,3-aminomutase (340 aa).

The region spanning 106 to 321 (RKYNNRILLL…SMISGFLVPK (216 aa)) is the Radical SAM core domain. [4Fe-4S] cluster-binding residues include Cys-120, Cys-124, and Cys-127. The residue at position 332 (Lys-332) is an N6-(pyridoxal phosphate)lysine.

Belongs to the radical SAM superfamily. KamA family. [4Fe-4S] cluster is required as a cofactor. Requires pyridoxal 5'-phosphate as cofactor.

The enzyme catalyses L-lysine = D-beta-lysine. With EpmA is involved in the beta-lysylation step of the post-translational modification of translation elongation factor P (EF-P) on 'Lys-34'. EpmB appears to act before EpmA. Displays lysine 2,3-aminomutase activity, producing (R)-beta-lysine from (S)-alpha-lysine (L-lysine). The protein is L-lysine 2,3-aminomutase (epmB) of Buchnera aphidicola subsp. Baizongia pistaciae (strain Bp).